Here is a 194-residue protein sequence, read N- to C-terminus: Der GTPase-activating protein YihI (194 aa).

Positions 1-87 are disordered; it reads MSRQKKSRNI…RDPRLGSRKK (87 aa). The segment covering 37–48 has biased composition (basic and acidic residues); it reads TRYELDAKARED.

This sequence belongs to the YihI family. As to quaternary structure, interacts with Der.

Functionally, a GTPase-activating protein (GAP) that modifies Der/EngA GTPase function. May play a role in ribosome biogenesis. The sequence is that of Der GTPase-activating protein YihI from Mannheimia succiniciproducens (strain KCTC 0769BP / MBEL55E).